Consider the following 553-residue polypeptide: ATP synthase F(1) complex subunit alpha, mitochondrial (553 aa).

The N-terminal 43 residues, 1–43 (MLSVRVAAAVVRALPRRAGLVSRNALGSSFIAARNFHASNTHL), are a transit peptide targeting the mitochondrion. 2 positions are modified to phosphoserine: Ser-53 and Ser-65. A Phosphoserine; alternate modification is found at Ser-76. Ser-76 carries O-linked (GlcNAc) serine; alternate glycosylation. A Phosphoserine modification is found at Ser-106. N6-acetyllysine is present on residues Lys-123, Lys-126, and Lys-132. Thr-134 carries the post-translational modification Phosphothreonine. Position 161 is an N6-acetyllysine; alternate (Lys-161). Residue Lys-161 is modified to N6-succinyllysine; alternate. A Phosphoserine modification is found at Ser-166. N6-acetyllysine; alternate is present on Lys-167. Position 167 is an N6-succinyllysine; alternate (Lys-167). Position 184 is a phosphoserine (Ser-184). Arg-204 is subject to Omega-N-methylarginine. Positions 215, 217, 218, 219, and 220 each coordinate ATP. Thr-219 contributes to the Mg(2+) binding site. An N6-acetyllysine; alternate mark is found at Lys-230 and Lys-239. 2 positions are modified to N6-succinyllysine; alternate: Lys-230 and Lys-239. N6-acetyllysine is present on Lys-240. 2 positions are modified to N6-acetyllysine; alternate: Lys-261 and Lys-305. Lys-261 and Lys-305 each carry N6-succinyllysine; alternate. Asp-312 is a Mg(2+) binding site. Residue Lys-427 is modified to N6-acetyllysine; alternate. Residue Lys-427 is modified to N6-succinyllysine; alternate. Residue Lys-434 is modified to N6-acetyllysine. ATP is bound by residues Gln-473 and Gln-475. An N6-acetyllysine; alternate mark is found at Lys-498, Lys-506, Lys-531, and Lys-539. 4 positions are modified to N6-succinyllysine; alternate: Lys-498, Lys-506, Lys-531, and Lys-539. Lys-541 is modified (N6-acetyllysine).

Belongs to the ATPase alpha/beta chains family. In terms of assembly, homotrimer. Component of the ATP synthase complex composed at least of ATP5F1A/subunit alpha, ATP5F1B/subunit beta, ATP5MC1/subunit c (homooctomer), MT-ATP6/subunit a, MT-ATP8/subunit 8, ATP5ME/subunit e, ATP5MF/subunit f, ATP5MG/subunit g, ATP5MK/subunit k, ATP5MJ/subunit j, ATP5F1C/subunit gamma, ATP5F1D/subunit delta, ATP5F1E/subunit epsilon, ATP5PF/subunit F6, ATP5PB/subunit b, ATP5PD/subunit d, ATP5PO/subunit OSCP. ATP synthase complex consists of a soluble F(1) head domain (subunits alpha(3) and beta(3)) - the catalytic core - and a membrane F(0) domain - the membrane proton channel (subunits c, a, 8, e, f, g, k and j). These two domains are linked by a central stalk (subunits gamma, delta, and epsilon) rotating inside the F1 region and a stationary peripheral stalk (subunits F6, b, d, and OSCP). Interacts with ATPAF2. Interacts with HRG; the interaction occurs on the surface of T-cells and alters the cell morphology when associated with concanavalin (in vitro). Interacts with PLG (angiostatin peptide); the interaction inhibits most of the angiogenic properties of angiostatin. Interacts with BLOC1S1. Interacts with BCL2L1 isoform BCL-X(L); the interaction mediates the association of BCL2L1 isoform BCL-X(L) with the mitochondrial membrane F(1)F(0) ATP synthase and enhances neurons metabolic efficiency. Interacts with CLN5 and PPT1. Interacts with S100A1; this interaction increases F1-ATPase activity. Interacts with ABCB7; this interaction allows the regulation of cellular iron homeostasis and cellular reactive oxygen species (ROS) levels in cardiomyocytes. Acetylated on lysine residues. BLOC1S1 is required for acetylation.

It localises to the mitochondrion inner membrane. It is found in the cell membrane. Its function is as follows. Subunit alpha, of the mitochondrial membrane ATP synthase complex (F(1)F(0) ATP synthase or Complex V) that produces ATP from ADP in the presence of a proton gradient across the membrane which is generated by electron transport complexes of the respiratory chain. ATP synthase complex consist of a soluble F(1) head domain - the catalytic core - and a membrane F(1) domain - the membrane proton channel. These two domains are linked by a central stalk rotating inside the F(1) region and a stationary peripheral stalk. During catalysis, ATP synthesis in the catalytic domain of F(1) is coupled via a rotary mechanism of the central stalk subunits to proton translocation. In vivo, can only synthesize ATP although its ATP hydrolase activity can be activated artificially in vitro. With the catalytic subunit beta (ATP5F1B), forms the catalytic core in the F(1) domain. Subunit alpha does not bear the catalytic high-affinity ATP-binding sites. The sequence is that of ATP synthase F(1) complex subunit alpha, mitochondrial from Pan troglodytes (Chimpanzee).